Here is a 218-residue protein sequence, read N- to C-terminus: Adenylate kinase (218 aa).

10–15 (GAGKGT) contributes to the ATP binding site. Residues 30–59 (STGDMLRAAVKAGTPLGLQAKAVMDSGSLV) are NMP. AMP-binding positions include Thr-31, Arg-36, 57–59 (SLV), 85–88 (GFPR), and Gln-92. Residues 122 to 159 (GRRSHPASGRTYHVRFNPPKIDGKDDLTGEALLQREDD) form an LID region. ATP-binding positions include Arg-123 and 132 to 133 (TY). The AMP site is built by Arg-156 and Arg-167. Gly-203 serves as a coordination point for ATP.

It belongs to the adenylate kinase family. As to quaternary structure, monomer.

It is found in the cytoplasm. It catalyses the reaction AMP + ATP = 2 ADP. The protein operates within purine metabolism; AMP biosynthesis via salvage pathway; AMP from ADP: step 1/1. Catalyzes the reversible transfer of the terminal phosphate group between ATP and AMP. Plays an important role in cellular energy homeostasis and in adenine nucleotide metabolism. The sequence is that of Adenylate kinase from Verminephrobacter eiseniae (strain EF01-2).